A 56-amino-acid polypeptide reads, in one-letter code: U-limacoditoxin(3)-Dv21 (56 aa).

An N-terminal signal peptide occupies residues 1–19 (MKKVIMLLLIFALFAYALS). 3 cysteine pairs are disulfide-bonded: Cys-26-Cys-41, Cys-33-Cys-46, and Cys-40-Cys-53.

This sequence belongs to the limacoditoxin-22 family. In terms of tissue distribution, expressed by the venom secretory cell of the spine. The spine is a cuticular structure containing a single large nucleated venom-secreting cell at its base. It is an independent unit capable of producing, storing and injecting venom. On the back of D.vulnerans caterpillars, spines are grouped together by 50 to 100 to form scoli, of which there are eight in D.vulnerans.

The protein localises to the secreted. Its function is as follows. Probable toxin. Shows a moderate antiparasitic activity against the major pathogenic nematode of ruminants (H.contortus, IC(50)=22.1 uM). Does not show insecticidal activities. Does not induce increase in intracellular calcium in mouse DRG neurons, suggesting that it does not induce pain. This chain is U-limacoditoxin(3)-Dv21, found in Doratifera vulnerans (Mottled cup moth).